Consider the following 153-residue polypeptide: Endoribonuclease YbeY (153 aa).

3 residues coordinate Zn(2+): histidine 116, histidine 120, and histidine 126.

It belongs to the endoribonuclease YbeY family. Requires Zn(2+) as cofactor.

It is found in the cytoplasm. In terms of biological role, single strand-specific metallo-endoribonuclease involved in late-stage 70S ribosome quality control and in maturation of the 3' terminus of the 16S rRNA. This is Endoribonuclease YbeY from Clavibacter michiganensis subsp. michiganensis (strain NCPPB 382).